The following is a 689-amino-acid chain: MQDIQLDKRLSELLSQAVTPHNAQPIMQALCQSLNEHNIRYYVDDAPSITDSEYDRLMQRLKQLEAEYPQFVAADSPTQRVGGMALAKFEQITHLKPMLSLDNAFDEADFSAFHKRVSDRVGEVSFCCEPKLDGLAVSILYRNGVLERAATRGDGTVGEDITENVKTIKSIPLKLRGDNYPELVEVRGEAFMPKAAFEALNERARLKDEKLFVNPRNAAAGSLRQLDSKITASRALSFYAYALGVVEPTSHELAKTHYEQLQQLKSWGLPVSSEIKVCDELSQVFAYYQDILTRRADLPFEIDGVVMKVNDIAQQQTLGFVAKSPRWAIAYKFPAQEEMTLLEGVDFQVGRTGAVTPVARLKPVFVGGVTVSNATLHNADEIARLGVMVGDTVIIRRAGDVIPQIVAIVPERRPEDAKAIAFPQHCPVCGSLVERLEGEAVARCSGGLFCEAQRKEAIKHFASRKALDIDGMGDKIVEQLIDKELVQSPADLFKLTASMMTMLDRMGIKSATNLALAIEAAKTTTLPRFLYALGIREVGETTAANLATHFGSLEALRVATIEQLIQVEDIGEVVAQHVAHFFAQPHNLEVIDALIAAGVNWPAIAAPSADEQPLKGQTWVLTGTLNQLNRNDAKAQLQALGAKVAGSVSKNTDCLVAGEAAGSKLAKAQELGVKVIGEDELLALLAANS.

NAD(+) is bound by residues Asp-51–Asp-55, Ser-100–Leu-101, and Glu-129. The N6-AMP-lysine intermediate role is filled by Lys-131. Positions 152, 189, 308, and 332 each coordinate NAD(+). Residues Cys-426, Cys-429, Cys-444, and Cys-450 each coordinate Zn(2+). The 81-residue stretch at Ala-609–Ser-689 folds into the BRCT domain.

The protein belongs to the NAD-dependent DNA ligase family. LigA subfamily. The cofactor is Mg(2+). Mn(2+) serves as cofactor.

It carries out the reaction NAD(+) + (deoxyribonucleotide)n-3'-hydroxyl + 5'-phospho-(deoxyribonucleotide)m = (deoxyribonucleotide)n+m + AMP + beta-nicotinamide D-nucleotide.. DNA ligase that catalyzes the formation of phosphodiester linkages between 5'-phosphoryl and 3'-hydroxyl groups in double-stranded DNA using NAD as a coenzyme and as the energy source for the reaction. It is essential for DNA replication and repair of damaged DNA. In Shewanella sp. (strain ANA-3), this protein is DNA ligase.